A 342-amino-acid chain; its full sequence is Holliday junction branch migration complex subunit RuvB (342 aa).

The tract at residues 1–184 (MDNERVITAV…FGIVQRLEFY (184 aa)) is large ATPase domain (RuvB-L). Residues Ile-23, Arg-24, Gly-65, Lys-68, Thr-69, Thr-70, 131–133 (EDY), Arg-174, Tyr-184, and Arg-221 each bind ATP. Thr-69 serves as a coordination point for Mg(2+). The interval 185–255 (SVDDLSGIVS…IAQRALDMLE (71 aa)) is small ATPAse domain (RuvB-S). The head domain (RuvB-H) stretch occupies residues 258–342 (SCGLDGTDRR…PRQDGDLFND (85 aa)). Arg-313 and Arg-318 together coordinate DNA.

Belongs to the RuvB family. Homohexamer. Forms an RuvA(8)-RuvB(12)-Holliday junction (HJ) complex. HJ DNA is sandwiched between 2 RuvA tetramers; dsDNA enters through RuvA and exits via RuvB. An RuvB hexamer assembles on each DNA strand where it exits the tetramer. Each RuvB hexamer is contacted by two RuvA subunits (via domain III) on 2 adjacent RuvB subunits; this complex drives branch migration. In the full resolvosome a probable DNA-RuvA(4)-RuvB(12)-RuvC(2) complex forms which resolves the HJ.

It is found in the cytoplasm. The enzyme catalyses ATP + H2O = ADP + phosphate + H(+). Functionally, the RuvA-RuvB-RuvC complex processes Holliday junction (HJ) DNA during genetic recombination and DNA repair, while the RuvA-RuvB complex plays an important role in the rescue of blocked DNA replication forks via replication fork reversal (RFR). RuvA specifically binds to HJ cruciform DNA, conferring on it an open structure. The RuvB hexamer acts as an ATP-dependent pump, pulling dsDNA into and through the RuvAB complex. RuvB forms 2 homohexamers on either side of HJ DNA bound by 1 or 2 RuvA tetramers; 4 subunits per hexamer contact DNA at a time. Coordinated motions by a converter formed by DNA-disengaged RuvB subunits stimulates ATP hydrolysis and nucleotide exchange. Immobilization of the converter enables RuvB to convert the ATP-contained energy into a lever motion, pulling 2 nucleotides of DNA out of the RuvA tetramer per ATP hydrolyzed, thus driving DNA branch migration. The RuvB motors rotate together with the DNA substrate, which together with the progressing nucleotide cycle form the mechanistic basis for DNA recombination by continuous HJ branch migration. Branch migration allows RuvC to scan DNA until it finds its consensus sequence, where it cleaves and resolves cruciform DNA. In Alcanivorax borkumensis (strain ATCC 700651 / DSM 11573 / NCIMB 13689 / SK2), this protein is Holliday junction branch migration complex subunit RuvB.